The following is a 167-amino-acid chain: Ribosome maturation factor RimM (167 aa).

The region spanning Glu94–Leu167 is the PRC barrel domain.

The protein belongs to the RimM family. In terms of assembly, binds ribosomal protein uS19.

The protein resides in the cytoplasm. In terms of biological role, an accessory protein needed during the final step in the assembly of 30S ribosomal subunit, possibly for assembly of the head region. Essential for efficient processing of 16S rRNA. May be needed both before and after RbfA during the maturation of 16S rRNA. It has affinity for free ribosomal 30S subunits but not for 70S ribosomes. In Thermoanaerobacter pseudethanolicus (strain ATCC 33223 / 39E) (Clostridium thermohydrosulfuricum), this protein is Ribosome maturation factor RimM.